A 2434-amino-acid polypeptide reads, in one-letter code: MGFLHQLQLLLWKNVTLKRRSPWVLAFEIFIPLVLFFILLGLRQKKPTISVKEAFYTAAPLTSAGILPVMQSLCPDGQRDEFGFLQYANSTVTQLLERLNRVVEESNLFDPERPSLGSELEALHQRLEALSSGPGTWESHSARPAVSSFSLDSVARDKRELWRFLMQNLSLPNSTAQALLAARVDPSEVYRLLFGPLPDLDGKLGFLRKQEPWSHLGSNPLFQMEELLLAPALLEQLTCAPGSGELGRILTMPEGHQVDLQGYRDAVCSGQATARAQHFSDLATELRNQLDIAKIAQQLGFNVPNGSDPQPQAPSPQSLQALLGDLLDVQKVLQDVDVLSALALLLPQGACAGRAPAPQAGSPSGPANSTGVGANTGPNTTVEEGTQSPVTPASPDTLQGQCSAFVQLWAGLQPILCGNNRTIEPEALRRGNMSSLGFTSKEQRNLGLLVHLMTSNPKILYAPAGSEADHVILKANETFAFVGNVTHYAQVWLNISAEIRSFLEQGRLQQHLHWLQQYVADLRLHPEAMNLSLDELPPALRLDYFSLPNGTALLQQLDTIDNAACGWIQFMSKVSVDIFKGFPDEESIVNYTLNQAYQDNVTVFASVIFQTRKDGSLPPHVHYKIRQNSSFTEKTNEIRRAYWRPGPNTGGRFYFLYGFVWIQDMIERAIINTFVGHDVVEPGNYVQMFPYPCYTRDDFLFVIEHMMPLCMVISWVYSVAMTIQHIVAEKEHRLKEVMKTMGLNNAVHWVAWFITGFVQLSISVTALTAILKYGQVLMHSHVLIIWLFLAVYAVATIMFCFLVSVLYSKAKLASACGGIIYFLSYVPYMYVAIREEVAHDKITAFEKCIASLMSTTAFGLGSKYFALYEVAGVGIQWHTFSQSPVEGDDFNLLLAVTMLMVDTVVYGVLTWYIEAVHPGMYGLPRPWYFPLQKSYWLGSGRTETWEWSWPWAHAPRLSVMEEDQACAMESRHFEETRGMEEEPTHLPLVVCVDKLTKVYKNDKKLALNKLSLNLYENQVVSFLGHNGAGKTTTMSILTGLFPPTSGSATIYGHDIRTEMDEIRKNLGMCPQHNVLFDQLTVEEHLWFYSRLKSMAQEEIRKEMDKMIEDLELSNKRHSLVQTLSGGMKRKLSVAIAFVGGSRAIILDEPTAGVDPYARRAIWDLILKYKPGRTILLSTHHMDEADLLGDRIAIISHGKLKCCGSPLFLKGAYGDGYRLTLVKRPAEPGTSQEPGMASSPSGRPQLSNCSEMQVSQFIRKHVASSLLVSDTSTELSYILPSEAVKKGAFERLFQQLEHSLDALHLSSFGLMDTTLEEVFLKVSEEDQSLENSEADVKESRKDALPGAEGLTAVESQAGNLARCSELAQSQASLQSASSVGSARGDEGAGYTDGYGDYRPLFDNLQDPDSVSLQEAEMEALARVGQGSRKLEGWWLKMRQFHGLLVKRFHCARRNSKALCSQILLPAFFVCVAMTVALSVPEIGDLPPLVLSPSQYHNYTQPRGNFIPYANEERREYRLRLSPDASPQQLVSTFRLPSGVGATCVLKSPANGSLGPMLNLSSGESRLLAARFFDSMCLESFTQGLPLSNFVPPPPSPAPSDSPLSPDEDSLLAWNTSLPPTAGPETWTWAPSLPRLVHEPVRCTCSAQGTGFSCPSSVGGHPPQMRVVTGDILTDITGHNVSEYLLFTSDRFRLHRYGAITFGNIQKSIPAPIGTRTPLMVRKIAVRRVAQVLYNNKGYHSMPTYLNSLNNAILRANLPKSKGNPAAYGITVTNHPMNKTSASLSLDYLLQGTDVVIAIFIIVAMSFVPASFVVFLVAEKSTKAKHLQFVSGCNPVIYWLANYVWDMLNYLVPATCCIIILFVFDLPAYTSPTNFPAVLSLFLLYGWSITPIMYPASFWFEVPSSAYVFLIVINLFIGITATVATFLLQLFEHDKDLKVVNSYLKSCFLIFPNYNLGHGLMEIAYNEYINEYYAKIGQFDKMKSPFEWDIVTRGLVAMTVEGFVGFFLTIMCQYNFLRQPQRLPVSTKPVEDDVDVASERQRVLRGDADNDMVKIENLTKVYKSRKIGRILAVDRLCLGVRPGECFGLLGVNGAGKTSTFKMLTGDESTTGGEAFVNGHSVLKDLLQVQQSLGYCPQFDALFDELTAREHLQLYTRLRGIPWKDEAQVVRWALEKLELTKCADKPAGSYSGGNKRKLSTAIALIGYPAFIFLDEPTTGMDPKARRFLWNLILDLIKTGRSVVLTSHSMEECEAVCTRLAIMVNGRLRCLGSIQHLKNRFGDGYMITVRTKSSQNVKDVVRFFNRNFPEAMLKERHHTKVQYQLKSEHISLAQVFSKMEHVVGVLGIEDYSVSQTTLDNVFVNFAKKQSDNVEQQEAEPSTLPSPLGLLSLLRPRPAPTELRALVADEPEDLDTEDEGLISFEEERAQLSFNTDTLC.

A glycan (N-linked (GlcNAc...) asparagine) is linked at asparagine 14. 2 consecutive transmembrane segments (helical) span residues 22–42 and 54–74; these read PWVL…LLGL and AFYT…QSLC. Asparagine 89, asparagine 168, and asparagine 173 each carry an N-linked (GlcNAc...) asparagine glycan. Glutamine 271 carries the post-translational modification N5-methylglutamine. Residues asparagine 305, asparagine 368, asparagine 379, asparagine 420, asparagine 432, asparagine 476, asparagine 484, asparagine 494, asparagine 530, asparagine 549, asparagine 590, asparagine 600, and asparagine 628 are each glycosylated (N-linked (GlcNAc...) asparagine). Residues 354–369 are compositionally biased toward low complexity; it reads RAPAPQAGSPSGPANS. Positions 354 to 396 are disordered; it reads RAPAPQAGSPSGPANSTGVGANTGPNTTVEEGTQSPVTPASPD. The span at 370-396 shows a compositional bias: polar residues; it reads TGVGANTGPNTTVEEGTQSPVTPASPD. The next 6 helical transmembrane spans lie at 699-719, 750-770, 782-802, 813-833, 857-877, and 893-913; these read FLFV…VYSV, VAWF…LTAI, VLII…FCFL, ASAC…YVAI, AFGL…GIQW, and LLAV…TWYI. The 232-residue stretch at 990 to 1221 folds into the ABC transporter 1 domain; the sequence is VCVDKLTKVY…YGDGYRLTLV (232 aa). Residue 1024-1031 coordinates ATP; sequence GHNGAGKT. Positions 1225–1246 are disordered; the sequence is AEPGTSQEPGMASSPSGRPQLS. Residues 1228-1246 show a composition bias toward polar residues; the sequence is GTSQEPGMASSPSGRPQLS. Serine 1238 is subject to Phosphoserine. Asparagine 1247 is a glycosylation site (N-linked (GlcNAc...) asparagine). Phosphoserine is present on residues serine 1327 and serine 1331. The chain crosses the membrane as a helical span at residues 1461–1481; that stretch reads ILLPAFFVCVAMTVALSVPEI. 3 N-linked (GlcNAc...) asparagine glycosylation sites follow: asparagine 1496, asparagine 1549, and asparagine 1557. A disordered region spans residues 1587–1606; that stretch reads NFVPPPPSPAPSDSPLSPDE. The span at 1589 to 1598 shows a compositional bias: pro residues; that stretch reads VPPPPSPAPS. N-linked (GlcNAc...) asparagine glycans are attached at residues asparagine 1613, asparagine 1678, and asparagine 1776. 5 helical membrane passes run 1793-1813, 1842-1862, 1873-1893, 1906-1926, and 1992-2012; these read VVIA…FVVF, VWDM…LFVF, FPAV…IMYP, VFLI…TFLL, and GLVA…MCQY. One can recognise an ABC transporter 2 domain in the interval 2051–2286; it reads VKIENLTKVY…FGDGYMITVR (236 aa). Asparagine 2055 carries N-linked (GlcNAc...) asparagine glycosylation. Residue 2088–2095 coordinates ATP; it reads GVNGAGKT. Residue threonine 2411 is modified to Phosphothreonine.

Belongs to the ABC transporter superfamily. ABCA family. In terms of processing, N-glycosylated. Methylated at Gln-271 by N6AMT1. As to expression, expressed at high levels in brain, at moderate levels in heart, kidney and lung, and at low levels in skeletal muscle, stomach, spleen, colon and pancreas. Not detected in the liver or small intestine. In brain, highly expressed in white matter and detected in oligodendrocytes. Expressed in cerebellum as well as the anterior commissure. Expressed mainly in the white matter but is also scattered in gray matter throughout the whole brain. Expressed in myelinating cells of both ventral and dorsal restricted regions in newborn spinal cord. Expressed in non-myelin-forming as well as in myelin-forming Schwann cells in the sciatic nerve.

It is found in the endosome membrane. It localises to the lysosome membrane. Its function is as follows. Probable transporter, its natural substrate has not been found yet. May have a role in macrophage lipid metabolism and neural development. May play a role in myelination, perhaps as a transporter for certain kinds of myelin chemical components. May play an important role in gamma-secretase processing of APP and thus in amyloid-beta peptide generation. Regulates esterification of plasma membrane cholesterol by modulation of sphingolipid metabolism. In terms of biological role, probable lipid transporter that modulates cholesterol sequestration in the late endosome/lysosome by regulating the intracellular sphingolipid metabolism, in turn participates in cholesterol homeostasis. May alter the transbilayer distribution of ceramide in the intraluminal membrane lipid bilayer, favoring its retention in the outer leaflet that results in increased acid ceramidase activity in the late endosome/lysosome, facilitating ceramide deacylation to sphingosine leading to the sequestration of free cholesterol in lysosomes. In addition regulates amyloid-beta production either by activating a signaling pathway that regulates amyloid precursor protein transcription through the modulation of sphingolipid metabolism or through its role in gamma-secretase processing of APP. May play a role in myelin formation. The protein is ATP-binding cassette sub-family A member 2 of Rattus norvegicus (Rat).